A 347-amino-acid chain; its full sequence is NADH-ubiquinone oxidoreductase chain 2 (347 aa).

11 consecutive transmembrane segments (helical) span residues 1 to 21 (MNPLIFSTILATIIMGTAIVM), 25 to 45 (HWLTIWIGFEMNMLAIIPMLM), 59 to 79 (YFLTQATASMLLMLAVIMNLT), 96 to 116 (IIMTIALTMKLGLSPFHFWVP), 127 to 147 (CLILLTWQKLAPLSILYMISP), 149 to 169 (INLNLLLSMSLISVAIGGWGG), 178 to 198 (IMAYSSIAHMGWMTAILAYNP), 200 to 220 (MTMLNLLVYITMTTTMFMLLI), 247 to 267 (IMLSLGGLPPLTGFLPKWMII), 276 to 296 (IIMPTLMAIMALLSLYFYMRL), and 325 to 345 (LLSPLIVMSTLTLPLAPMMSL).

The protein belongs to the complex I subunit 2 family. As to quaternary structure, core subunit of respiratory chain NADH dehydrogenase (Complex I) which is composed of 45 different subunits. Interacts with TMEM242.

The protein resides in the mitochondrion inner membrane. The catalysed reaction is a ubiquinone + NADH + 5 H(+)(in) = a ubiquinol + NAD(+) + 4 H(+)(out). Functionally, core subunit of the mitochondrial membrane respiratory chain NADH dehydrogenase (Complex I) which catalyzes electron transfer from NADH through the respiratory chain, using ubiquinone as an electron acceptor. Essential for the catalytic activity and assembly of complex I. This Natalus stramineus (Mexican funnel-eared bat) protein is NADH-ubiquinone oxidoreductase chain 2.